The sequence spans 208 residues: Glutathione S-transferase 2 (208 aa).

Positions Met-1–Gly-78 constitute a GST N-terminal domain. Glutathione-binding positions include Tyr-7, Lys-42, Gln-49 to Leu-50, and Gln-62 to Ser-63. The GST C-terminal domain maps to Asn-80–Val-200.

This sequence belongs to the GST superfamily. Pi family. As to quaternary structure, homodimer. As to expression, hypodermis, wall of the seminal receptacle and spermatozoa of adult worms.

It catalyses the reaction RX + glutathione = an S-substituted glutathione + a halide anion + H(+). Its function is as follows. Appears to play a central role in the parasite detoxification system. The protein is Glutathione S-transferase 2 (GST2) of Onchocerca volvulus.